The following is a 957-amino-acid chain: Vacuolar membrane protease (957 aa).

The Cytoplasmic segment spans residues 1–10 (MARYNPFSFT). The chain crosses the membrane as a helical span at residues 11–31 (PGPVVFFTTVIYVGLFAALLV). Topologically, residues 32-369 (THLTVPDYPS…RVFVVFQLHT (338 aa)) are vacuolar. Residues asparagine 48, asparagine 105, and asparagine 136 are each glycosylated (N-linked (GlcNAc...) asparagine). Zn(2+) contacts are provided by histidine 152 and aspartate 164. Residue glutamate 198 is the Proton acceptor of the active site. Zn(2+)-binding residues include glutamate 199, glutamate 224, and histidine 297. The helical transmembrane segment at 370–390 (LFALCVTLLVVAPITLIGLTF) threads the bilayer. The Cytoplasmic segment spans residues 391–423 (GLSKADKNYLLARKAFVYSSDDDNPVQLYGWRG). Residues 424 to 444 (FFRFPIIFISATAVVVALAYL) form a helical membrane-spanning segment. At 445–450 (LVRFNA) the chain is on the vacuolar side. Residues 451 to 471 (FIIYSSPFAVWSMMLSAWFFV) form a helical membrane-spanning segment. Over 472–490 (AWFFSRGADAMRPSALQRM) the chain is Cytoplasmic. The chain crosses the membrane as a helical span at residues 491-511 (YALIWLFIGSFVLLTIVTVFV). Residues 512–521 (NNYQVVAGYP) are Vacuolar-facing. A helical transmembrane segment spans residues 522–542 (ALFYFAVVFVAIMLSYLELFF). At 543 to 642 (APTKSAYARH…YPGEQEWSGK (100 aa)) the chain is on the cytoplasmic side. 2 disordered regions span residues 559 to 586 (SRRNSDSASRPLTGSTTAARSDDRPVAD) and 603 to 627 (FTRYGSRRDSASEGGEDQAQGSQRL). Residues 603 to 613 (FTRYGSRRDSA) are compositionally biased toward basic and acidic residues. A helical membrane pass occupies residues 643 to 663 (LPSWIWIIQLLLLAPLVIVLV). Residues 664-685 (GQVALLLTSALYQTPSDGNSPL) lie on the Vacuolar side of the membrane. The chain crosses the membrane as a helical span at residues 686–706 (FIYLAIAALSVLLLAPTGPFI). Topologically, residues 707-713 (HRFTYHV) are cytoplasmic. The chain crosses the membrane as a helical span at residues 714–734 (PTFLFLVCLGTVIYNLVAFPF). Residues 735-957 (SRDHRLKVYF…LVEGFKRFEI (223 aa)) are Vacuolar-facing. N-linked (GlcNAc...) asparagine glycans are attached at residues asparagine 782, asparagine 818, and asparagine 834.

Belongs to the peptidase M28 family. The cofactor is Zn(2+).

It is found in the vacuole membrane. Its function is as follows. May be involved in vacuolar sorting and osmoregulation. In Pyrenophora teres f. teres (strain 0-1) (Barley net blotch fungus), this protein is Vacuolar membrane protease.